Here is a 349-residue protein sequence, read N- to C-terminus: Isopentenyl-diphosphate delta-isomerase (349 aa).

Substrate is bound at residue 6–7; that stretch reads RK. Residues 62-64, S93, and N122 contribute to the FMN site; that span reads AMT. Q152 contributes to the substrate binding site. Position 153 (E153) interacts with Mg(2+). FMN is bound by residues K184, T214, 258–259, and 280–281; these read GG and AG.

This sequence belongs to the IPP isomerase type 2 family. Homooctamer. Dimer of tetramers. FMN serves as cofactor. NADPH is required as a cofactor. It depends on Mg(2+) as a cofactor.

The protein resides in the cytoplasm. The catalysed reaction is isopentenyl diphosphate = dimethylallyl diphosphate. Involved in the biosynthesis of isoprenoids. Catalyzes the 1,3-allylic rearrangement of the homoallylic substrate isopentenyl (IPP) to its allylic isomer, dimethylallyl diphosphate (DMAPP). The chain is Isopentenyl-diphosphate delta-isomerase from Bacillus cytotoxicus (strain DSM 22905 / CIP 110041 / 391-98 / NVH 391-98).